A 192-amino-acid chain; its full sequence is Peptidyl-tRNA hydrolase (192 aa).

A tRNA-binding site is contributed by Tyr18. Catalysis depends on His23, which acts as the Proton acceptor. Positions 69, 71, and 117 each coordinate tRNA.

The protein belongs to the PTH family. As to quaternary structure, monomer.

Its subcellular location is the cytoplasm. It catalyses the reaction an N-acyl-L-alpha-aminoacyl-tRNA + H2O = an N-acyl-L-amino acid + a tRNA + H(+). Its function is as follows. Hydrolyzes ribosome-free peptidyl-tRNAs (with 1 or more amino acids incorporated), which drop off the ribosome during protein synthesis, or as a result of ribosome stalling. Functionally, catalyzes the release of premature peptidyl moieties from peptidyl-tRNA molecules trapped in stalled 50S ribosomal subunits, and thus maintains levels of free tRNAs and 50S ribosomes. This chain is Peptidyl-tRNA hydrolase, found in Neisseria meningitidis serogroup A / serotype 4A (strain DSM 15465 / Z2491).